Reading from the N-terminus, the 207-residue chain is NADH-quinone oxidoreductase subunit A (207 aa).

3 helical membrane passes run 6 to 26, 62 to 82, and 87 to 107; these read LSAI…LVVP, LVAI…AYAV, and AGWL…IGLV.

It belongs to the complex I subunit 3 family. In terms of assembly, NDH-1 is composed of 14 different subunits. Subunits NuoA, H, J, K, L, M, N constitute the membrane sector of the complex.

The protein localises to the cell inner membrane. It catalyses the reaction a quinone + NADH + 5 H(+)(in) = a quinol + NAD(+) + 4 H(+)(out). Functionally, NDH-1 shuttles electrons from NADH, via FMN and iron-sulfur (Fe-S) centers, to quinones in the respiratory chain. The immediate electron acceptor for the enzyme in this species is believed to be ubiquinone. Couples the redox reaction to proton translocation (for every two electrons transferred, four hydrogen ions are translocated across the cytoplasmic membrane), and thus conserves the redox energy in a proton gradient. The protein is NADH-quinone oxidoreductase subunit A of Psychrobacter cryohalolentis (strain ATCC BAA-1226 / DSM 17306 / VKM B-2378 / K5).